Reading from the N-terminus, the 251-residue chain is MLEIHQFPCLSDNYGFLLHDPDSGETAAIDTPDGKEYLKQAKAKGWTITHIWNTHWHPDHAGGNKDIVEATGAKVIAPQEVEKLSGIDRVVGHGDTVDIGDFTADVIDVSGHTNGHIAYHLPEAGIAFVGDSVFALGCGRMFEGEPKQFWDSLSRIKALPPETMLYCAHEYTAANARFAVHADPENDALVAYVEEITAKRERDEPTVPTQLKRELATNPFLRADDPALVAKWGGDAPHETFAALRAGKDNF.

Zn(2+) is bound by residues H55, H57, D59, H60, H112, D131, and H169.

Belongs to the metallo-beta-lactamase superfamily. Glyoxalase II family. As to quaternary structure, monomer. It depends on Zn(2+) as a cofactor.

It carries out the reaction an S-(2-hydroxyacyl)glutathione + H2O = a 2-hydroxy carboxylate + glutathione + H(+). The protein operates within secondary metabolite metabolism; methylglyoxal degradation; (R)-lactate from methylglyoxal: step 2/2. Thiolesterase that catalyzes the hydrolysis of S-D-lactoyl-glutathione to form glutathione and D-lactic acid. The chain is Hydroxyacylglutathione hydrolase from Erythrobacter litoralis (strain HTCC2594).